Reading from the N-terminus, the 729-residue chain is ATP-dependent RNA helicase DHX15 homolog (729 aa).

Residues 1–25 (MSKRRIEVGETYGSKAKKDPEASSS) form a disordered region. Positions 82 to 246 (MRLLSLHQCI…FDNAPLMKVP (165 aa)) constitute a Helicase ATP-binding domain. 95-102 (GETGSGKT) contacts ATP. The DEAH box signature appears at 193–196 (DEAH). The region spanning 271–451 (TVIQIHMCEE…TVVLQLKKLG (181 aa)) is the Helicase C-terminal domain.

The protein belongs to the DEAD box helicase family. DEAH subfamily. DDX15/PRP43 sub-subfamily.

The catalysed reaction is ATP + H2O = ADP + phosphate + H(+). Functionally, RNA helicase involved in mRNA processing and antiviral innate immunity. Acts as an activator of the p38 MAPK cascade. This chain is ATP-dependent RNA helicase DHX15 homolog, found in Drosophila melanogaster (Fruit fly).